Reading from the N-terminus, the 298-residue chain is DegV domain-containing protein UU535 (298 aa).

The region spanning 5 to 287 (FLIMTDSSTT…KGALGIQVIA (283 aa)) is the DegV domain. 2 residues coordinate hexadecanoate: serine 65 and serine 96.

May bind long-chain fatty acids, such as palmitate, and may play a role in lipid transport or fatty acid metabolism. This Ureaplasma parvum serovar 3 (strain ATCC 700970) protein is DegV domain-containing protein UU535.